Consider the following 365-residue polypeptide: Histidinol-phosphate aminotransferase (365 aa).

The residue at position 223 (lysine 223) is an N6-(pyridoxal phosphate)lysine.

The protein belongs to the class-II pyridoxal-phosphate-dependent aminotransferase family. Histidinol-phosphate aminotransferase subfamily. In terms of assembly, homodimer. Pyridoxal 5'-phosphate serves as cofactor.

The catalysed reaction is L-histidinol phosphate + 2-oxoglutarate = 3-(imidazol-4-yl)-2-oxopropyl phosphate + L-glutamate. Its pathway is amino-acid biosynthesis; L-histidine biosynthesis; L-histidine from 5-phospho-alpha-D-ribose 1-diphosphate: step 7/9. The protein is Histidinol-phosphate aminotransferase of Bacillus pumilus (strain SAFR-032).